A 105-amino-acid polypeptide reads, in one-letter code: MNTVDFSKGLVPTIILDDQNGEVLMLAYMNQESYQKTLETGYTWFFSRSRNELWNKGETSGNTQKVKQIWTDCDNDTLLIRVIQTGPACHTGKKSCFFNLIKEDF.

Residue Asp-72 participates in Mg(2+) binding. Cys-73 provides a ligand contact to Zn(2+). Mg(2+) is bound by residues Asp-74 and Asp-76. Positions 89 and 96 each coordinate Zn(2+).

This sequence belongs to the PRA-CH family. Homodimer. Mg(2+) is required as a cofactor. Zn(2+) serves as cofactor.

Its subcellular location is the cytoplasm. The enzyme catalyses 1-(5-phospho-beta-D-ribosyl)-5'-AMP + H2O = 1-(5-phospho-beta-D-ribosyl)-5-[(5-phospho-beta-D-ribosylamino)methylideneamino]imidazole-4-carboxamide. Its pathway is amino-acid biosynthesis; L-histidine biosynthesis; L-histidine from 5-phospho-alpha-D-ribose 1-diphosphate: step 3/9. Its function is as follows. Catalyzes the hydrolysis of the adenine ring of phosphoribosyl-AMP. In Listeria innocua serovar 6a (strain ATCC BAA-680 / CLIP 11262), this protein is Phosphoribosyl-AMP cyclohydrolase.